The following is a 43-amino-acid chain: uncharacterized protein (43 aa).

A signal peptide spans 1–22 (MKRKIIAIGIFFRLFIIHIHFS).

This is an uncharacterized protein from Schizosaccharomyces pombe (strain 972 / ATCC 24843) (Fission yeast).